The chain runs to 246 residues: MIKFENVSKVYPNGTKGLTDVNLQIDQGEFVAIIGTSGAGKSTLIRCVNGLNDVTSGRLFVNDTDVSKLKGKDLRKFRRHVGMIFQSYNLVPRVTVLKNVMFARVPEMNLFKVIFGLFSKEDKLVALDSLNKVGILDKAYIRADQLSGGQQQRVSLARALTQESEILLADEPVSALDPVTAKEVMDDFKRINEELNKTILLNIHHVELALEYASRIIAVKKGKIVYDGPSQEVTKEILDEVYRKEG.

Positions 2 to 246 constitute an ABC transporter domain; the sequence is IKFENVSKVY…ILDEVYRKEG (245 aa). Residue 35–42 participates in ATP binding; that stretch reads GTSGAGKS.

It belongs to the ABC transporter superfamily. Phosphonates importer (TC 3.A.1.9.1) family. In terms of assembly, the complex is composed of two ATP-binding proteins (PhnC), two transmembrane proteins (PhnE) and a solute-binding protein (PhnD).

Its subcellular location is the cell membrane. It catalyses the reaction phosphonate(out) + ATP + H2O = phosphonate(in) + ADP + phosphate + H(+). Functionally, part of the ABC transporter complex PhnCDE involved in phosphonates import. Responsible for energy coupling to the transport system. In Lactococcus lactis subsp. cremoris (strain SK11), this protein is Phosphonates import ATP-binding protein PhnC.